A 258-amino-acid polypeptide reads, in one-letter code: Thiamine thiazole synthase (258 aa).

NAD(+)-binding positions include Ser36, 55 to 56, Gly63, Val127, and 153 to 155; these read ER and HVD. Fe cation contacts are provided by Asp155 and His170. Position 224 (Met224) interacts with NAD(+). Arg234 is a binding site for glycine.

The protein belongs to the THI4 family. As to quaternary structure, homooctamer; tetramer of dimers. It depends on Fe(2+) as a cofactor.

It catalyses the reaction hydrogen sulfide + glycine + NAD(+) = ADP-5-ethyl-4-methylthiazole-2-carboxylate + nicotinamide + 3 H2O + H(+). It functions in the pathway cofactor biosynthesis; thiamine diphosphate biosynthesis. Functionally, involved in the biosynthesis of the thiazole moiety of thiamine. Catalyzes the conversion of NAD and glycine to adenosine diphosphate 5-(2-hydroxyethyl)-4-methylthiazole-2-carboxylate (ADT), an adenylated thiazole intermediate, using free sulfide as a source of sulfur. This chain is Thiamine thiazole synthase, found in Desulfosudis oleivorans (strain DSM 6200 / JCM 39069 / Hxd3) (Desulfococcus oleovorans).